The sequence spans 208 residues: Uracil phosphoribosyltransferase (208 aa).

5-phospho-alpha-D-ribose 1-diphosphate contacts are provided by residues arginine 78, arginine 103, and 130–138 (DPMLATGGT). Residues isoleucine 193 and 198-200 (GDA) each bind uracil. Aspartate 199 is a binding site for 5-phospho-alpha-D-ribose 1-diphosphate.

Belongs to the UPRTase family. The cofactor is Mg(2+).

It carries out the reaction UMP + diphosphate = 5-phospho-alpha-D-ribose 1-diphosphate + uracil. Its pathway is pyrimidine metabolism; UMP biosynthesis via salvage pathway; UMP from uracil: step 1/1. With respect to regulation, allosterically activated by GTP. Functionally, catalyzes the conversion of uracil and 5-phospho-alpha-D-ribose 1-diphosphate (PRPP) to UMP and diphosphate. The sequence is that of Uracil phosphoribosyltransferase from Blochmanniella floridana.